A 295-amino-acid polypeptide reads, in one-letter code: Protein transport protein SSO2 (295 aa).

Low complexity predominate over residues 1-18; it reads MSNPYQNSQNGYQQNNSY. The disordered stretch occupies residues 1–31; it reads MSNPYQNSQNGYQQNNSYELNNYPNKQYSSS. The Cytoplasmic segment spans residues 1-270; that stretch reads MSNPYQNSQN…SAKSARKKKL (270 aa). The span at 19–31 shows a compositional bias: polar residues; the sequence is ELNNYPNKQYSSS. The stretch at 33-110 forms a coiled coil; the sequence is EDDFVQFMNE…NRIKNVQTQA (78 aa). The t-SNARE coiled-coil homology domain maps to 196–258; sequence LNEVQVRHRE…EQGVGHTNKA (63 aa). The chain crosses the membrane as a helical; Anchor for type IV membrane protein span at residues 271 to 291; the sequence is WCFFICLLIVIILAVILGAYF. Topologically, residues 292–295 are extracellular; that stretch reads GTRK.

This sequence belongs to the syntaxin family.

Its subcellular location is the membrane. Late secretory t-SNARE protein required for secretion and proper cytokinesis. Plays an important role in the secretion of virulence-associated extracellular enzymes and vesicle-mediated polarized hyphal growth. The protein is Protein transport protein SSO2 (SSO2) of Candida albicans (strain SC5314 / ATCC MYA-2876) (Yeast).